We begin with the raw amino-acid sequence, 456 residues long: Probable glycine dehydrogenase (decarboxylating) subunit 1 (456 aa).

Belongs to the GcvP family. N-terminal subunit subfamily. In terms of assembly, the glycine cleavage system is composed of four proteins: P, T, L and H. In this organism, the P 'protein' is a heterodimer of two subunits.

The catalysed reaction is N(6)-[(R)-lipoyl]-L-lysyl-[glycine-cleavage complex H protein] + glycine + H(+) = N(6)-[(R)-S(8)-aminomethyldihydrolipoyl]-L-lysyl-[glycine-cleavage complex H protein] + CO2. Functionally, the glycine cleavage system catalyzes the degradation of glycine. The P protein binds the alpha-amino group of glycine through its pyridoxal phosphate cofactor; CO(2) is released and the remaining methylamine moiety is then transferred to the lipoamide cofactor of the H protein. The sequence is that of Probable glycine dehydrogenase (decarboxylating) subunit 1 from Rhizorhabdus wittichii (strain DSM 6014 / CCUG 31198 / JCM 15750 / NBRC 105917 / EY 4224 / RW1) (Sphingomonas wittichii).